The chain runs to 1279 residues: Photoreceptor cilium actin regulator (1279 aa).

G2 carries N-myristoyl glycine lipidation. C3 is lipidated: S-palmitoyl cysteine. 5 disordered regions span residues 101–168 (NKPQ…KGRV), 380–598 (AAQV…SHVE), 802–821 (EVSESEDISGDVEEDLENLP), 860–1107 (ASHP…TTAK), and 1127–1279 (KSSS…KEIS). The span at 126 to 168 (FSGKESKENTPQETSKGNRESVCHQPDSQDHCRQSATESKGRV) shows a compositional bias: basic and acidic residues. Over residues 477–491 (SEEEDCSPEEEDELS) the composition is skewed to acidic residues. Basic and acidic residues-rich tracts occupy residues 535–547 (LKMKEAISERIKF) and 580–598 (GPERQRRSQSEGCLKSHVE). Over residues 804 to 818 (SESEDISGDVEEDLE) the composition is skewed to acidic residues. Composition is skewed to polar residues over residues 886–901 (GSGSSPRLHSTRSGST), 913–925 (DLNSKQTASPSSE), and 955–965 (TNPTPGQSRTL). The span at 972–990 (FSRDPHSSEASRKGPERSL) shows a compositional bias: basic and acidic residues. Polar residues predominate over residues 1047–1062 (RKTTSPPCQHPQSNPA). The segment covering 1076–1090 (PSSASCSSPSVSPSR) has biased composition (low complexity). Residues 1091–1100 (GSKDSIHSED) are compositionally biased toward basic and acidic residues. A compositionally biased stretch (polar residues) spans 1226–1241 (WNNSRVPELQGSSTKR). Residues 1259-1279 (RMNRGQDRPQPESQPQHKEIS) show a composition bias toward basic and acidic residues.

In terms of tissue distribution, specifically expressed in retina.

It is found in the cell projection. The protein localises to the cilium. It localises to the photoreceptor outer segment. The protein resides in the photoreceptor inner segment. Its function is as follows. Plays an essential role for normal photoreceptor cell maintenance and vision. This Mus musculus (Mouse) protein is Photoreceptor cilium actin regulator.